The following is a 540-amino-acid chain: Medium/long-chain-fatty-acid--[acyl-carrier-protein] ligase FadD10 (540 aa).

Mg(2+) is bound at residue Thr-177. ATP contacts are provided by Ile-226, Val-316, and Ser-320. Glu-321 is a Mg(2+) binding site. An ATP-binding site is contributed by Asp-408.

Belongs to the ATP-dependent AMP-binding enzyme family. As to quaternary structure, homodimer. The cofactor is Mg(2+).

The protein localises to the cytoplasm. The enzyme catalyses a medium-chain fatty acid + holo-[ACP] + ATP = a medium-chain fatty acyl-[ACP] + AMP + diphosphate. The catalysed reaction is a medium-chain fatty acid + ATP + H(+) = a medium-chain fatty acyl-AMP + diphosphate. It carries out the reaction a medium-chain fatty acyl-AMP + holo-[ACP] = a medium-chain fatty acyl-[ACP] + AMP + H(+). It catalyses the reaction a long-chain fatty acid + holo-[ACP] + ATP = a long-chain fatty acyl-[ACP] + AMP + diphosphate. The enzyme catalyses a long-chain fatty acid + ATP + H(+) = a long-chain fatty acyl-AMP + diphosphate. The catalysed reaction is a long-chain fatty acyl-AMP + holo-[ACP] = a long-chain fatty acyl-[ACP] + AMP + H(+). It carries out the reaction a (2E)-enoyl fatty acid + holo-[ACP] + ATP = a (2E)-enoyl-[ACP] + AMP + diphosphate. It catalyses the reaction a (2E)-enoyl fatty acid + ATP + H(+) = a (2E)-2-fatty-enoyl-AMP + diphosphate. The enzyme catalyses a (2E)-2-fatty-enoyl-AMP + holo-[ACP] = a (2E)-enoyl-[ACP] + AMP + H(+). The catalysed reaction is a (3R)-3-isocyanyl-fatty acid + holo-[ACP] + ATP = a (3R)-3-isocyanyl-fatty acyl-[ACP] + AMP + diphosphate. It carries out the reaction a (3R)-3-isocyanyl-fatty acid + ATP + H(+) = a (3R)-3-isocyanyl-fatty acyl-AMP + diphosphate. It catalyses the reaction a (3R)-3-isocyanyl-fatty acyl-AMP + holo-[ACP] = a (3R)-3-isocyanyl-fatty acyl-[ACP] + AMP + H(+). It participates in lipid metabolism; fatty acid metabolism. Its function is as follows. Acyl:acyl-carrier protein ligase involved in the biosynthesis of a unique class of isonitrile lipopeptides (INLPs) that seem to function as virulence factors in M.tuberculosis and to play a role in metal acquisition. Catalyzes the activation of medium/long-chain fatty acids as acyl-adenylates (acyl-AMP), which are then transferred to the phosphopantetheine arm of the acyl-carrier protein (ACP) MT0109. Acts twice during the INLP pathway, catalyzing the activation of a (2E)-enoyl fatty acid as well as the corresponding (3R)-3-isocyanyl-fatty acid as acyl-adenylates (acyl-AMP), and then the acyl transfer to the dedicated acyl-carrier protein MT0109. This chain is Medium/long-chain-fatty-acid--[acyl-carrier-protein] ligase FadD10 (fadD10), found in Mycobacterium tuberculosis (strain CDC 1551 / Oshkosh).